Consider the following 243-residue polypeptide: Chromosome partition protein MukE (243 aa).

The tract at residues 214-243 (DSLALEKQADLNEVDDNDELEDELDDEEHA) is disordered. Positions 225–243 (NEVDDNDELEDELDDEEHA) are enriched in acidic residues.

It belongs to the MukE family. Interacts, and probably forms a ternary complex, with MukF and MukB. The complex formation is stimulated by calcium or magnesium.

The protein resides in the cytoplasm. It is found in the nucleoid. Functionally, involved in chromosome condensation, segregation and cell cycle progression. May participate in facilitating chromosome segregation by condensation DNA from both sides of a centrally located replisome during cell division. Probably acts via its interaction with MukB and MukF. This Pasteurella multocida (strain Pm70) protein is Chromosome partition protein MukE.